Consider the following 343-residue polypeptide: MPRSFLVKSKKTHTYNQHRYVEEQPVTGVDLVATVYHAHCTECPAEFPAFSTDPTEKQHTPENVITEEARSDPGDPREKIPFLSRSISPNSFQGIALSSMRPLKHYDPSPLSAFYTQNFSWDALHSTYGFKQIPSHIHPSMLQNSINLYSCPPRVDSDSDHPINYSMSYSPKMDTYHCVKCSKVFSTSHGLEVHVRRSHSGTRPFVCNICGKSFGHAVSLEQHLNVHSQERSFECKMCGKTFKRSSTLSTHLLIHSDTRPYPCQFCGKRFHQKSDMKKHTYIHTGEKPHKCQVCGKAFSQSSNLITHSRKHTGFKPFSCDLCCKGFQRKVDLRRHRENQHGLK.

The segment at 1–20 is mediates repression of transcription; the sequence is MPRSFLVKSKKTHTYNQHRY. The segment at 1–20 is SNAG domain; sequence MPRSFLVKSKKTHTYNQHRY. Positions 51–77 are disordered; sequence STDPTEKQHTPENVITEEARSDPGDPR. Positions 67–77 are enriched in basic and acidic residues; it reads EEARSDPGDPR. 6 C2H2-type zinc fingers span residues 176–199, 205–227, 233–255, 261–283, 289–311, and 317–340; these read YHCV…RRSH, FVCN…LNVH, FECK…LLIH, YPCQ…TYIH, HKCQ…SRKH, and FSCD…ENQH.

The protein resides in the nucleus. In terms of biological role, essential transcriptional regulator necessary for development and differentiation of erythroid and megakaryocytic lineages. Alters histone methylation by recruiting histone methyltransferase to target genes promoters. Plays a role in heterochromatin formation. In Xenopus laevis (African clawed frog), this protein is Zinc finger protein Gfi-1b (gfi1b).